The primary structure comprises 277 residues: Putative hydro-lyase BPP3031 (277 aa).

The protein belongs to the D-glutamate cyclase family.

The sequence is that of Putative hydro-lyase BPP3031 from Bordetella parapertussis (strain 12822 / ATCC BAA-587 / NCTC 13253).